The following is a 351-amino-acid chain: MLYPLVKKYLFSLDAEDAHEKVCKILRTLSKSSFLCSLIHSQWGYKNPKLENEILGLNFPNPLGLAAGFDKNASMLRALIAFGFGYLEAGTLTNEAQVGNERPRLFRHIEEESLQNAMGFNNYGAVLGARSFNRFAPYKTPIGINLGKNKHIEQAHALEDYKAVLNQCLNIGDYYTFNLSSPNTPNLRDLQNKAFVNELFCMAKEMTHKPLFLKIAPDLEIDDMLEIVNSAIEAGAHGIIATNTTIDKSLVFAPKEMGGLSGKCLTKKSREVFKELAKAFFNKSVLVSVGGISDAKEAYERIKMGASLLQIYSAFIYNGPNLCQNILKDLVKLLQKDGFLSVKEAIGADLR.

FMN is bound by residues 67–71 (AGFDK) and Thr91. Residue Lys71 coordinates substrate. 116 to 120 (NAMGF) provides a ligand contact to substrate. Residues Asn145 and Asn178 each contribute to the FMN site. Residue Asn178 coordinates substrate. Ser181 (nucleophile) is an active-site residue. Asn183 contributes to the substrate binding site. FMN contacts are provided by Lys214 and Thr242. 243–244 (NT) serves as a coordination point for substrate. FMN-binding positions include Gly262, Gly291, and 312–313 (YS).

The protein belongs to the dihydroorotate dehydrogenase family. Type 2 subfamily. In terms of assembly, monomer. FMN is required as a cofactor.

The protein resides in the cell membrane. The enzyme catalyses (S)-dihydroorotate + a quinone = orotate + a quinol. It participates in pyrimidine metabolism; UMP biosynthesis via de novo pathway; orotate from (S)-dihydroorotate (quinone route): step 1/1. In terms of biological role, catalyzes the conversion of dihydroorotate to orotate with quinone as electron acceptor. This chain is Dihydroorotate dehydrogenase (quinone), found in Helicobacter pylori (strain G27).